The primary structure comprises 696 residues: MDDDAGDGAASGGTKRKVTAASSSAAAKGKAAGKGKAASKASALATAKESSLLKQKSPAEFFAENKNIAGFDNPGKSLYTTMRELVENALDSAESISELPDIEIIIEEITKSKFNTMIGLVDRQRIDEELYDDFESAKAREKRLAKEARFQETQAKNAALGKKVKEAPAARGKGRGEAAFFRVTCKDNGRGMPHDDIPNMLGRVLSGTKYGLRQTRGKFGLGAKMALIWSKMSTGLPIEIKSSMKGQNFISFCLLDIDIHKNVPHVHLHEKRENKDRWHGAELQVIIEGNWTTHRSKILHYMRQMAVITPYAQFLFRFLSDSPDKNLTIQFARRTDVMPPIPLQTKHHPSAVDLLLIKRLISETTKQNLLQFLQHEFVNISKSHAERLIGEMGPDFSAKTTVKSLTSQQLVRIHQLFRQAKFDDPSGNCLSPAGEYNLRLGIIKELHPDLVATHASSPQVFEGHPFIVEAGISIGGKDVKHGLNIFRYANRIPLLFEQGADVITRTALKRINWSSYKINQQQDKIGVFVSIVSTKIPFKGTGKEYIGDDITEIASAVQSALKQCCLQLKSKIVKKLQARERQDRKRNLNRYIPDVARAIMETLGEIADESPPKRPRYDKEDEELLEKVNSEEVTEMTFRDCLTQHVEQVDYEMALEYAMQSGVSEEPREALYLNSLEGSYKFIDFQSPVFVFRFIP.

The interval 1–36 (MDDDAGDGAASGGTKRKVTAASSSAAAKGKAAGKGK) is disordered. A compositionally biased stretch (low complexity) spans 20–36 (AASSSAAAKGKAAGKGK). Residues Asn-88, Asp-187, 208-209 (TK), 217-224 (GKFGLGAK), and Lys-543 contribute to the ATP site.

This sequence belongs to the TOP6B family. In terms of assembly, homodimer. Heterotetramer of two TOP6A and two TOP6B subunits. Interacts with SPO11-4.

The protein localises to the nucleus. The catalysed reaction is ATP-dependent breakage, passage and rejoining of double-stranded DNA.. Component of the DNA topoisomerase VI involved in chromatin organization and progression of endoreduplication cycles. Relaxes both positive and negative superturns and exhibits a strong decatenase activity. The B subunit binds ATP. In Oryza sativa subsp. japonica (Rice), this protein is DNA topoisomerase 6 subunit B (TOP6B).